Here is a 600-residue protein sequence, read N- to C-terminus: NADH-quinone oxidoreductase subunit C/D (600 aa).

Residues 1 to 190 (MVNNMTDLTA…SPFELTKAKQ (190 aa)) are NADH dehydrogenase I subunit C. The NADH dehydrogenase I subunit D stretch occupies residues 214–600 (DFMFLNLGPN…IDFVMSDVDR (387 aa)).

In the N-terminal section; belongs to the complex I 30 kDa subunit family. This sequence in the C-terminal section; belongs to the complex I 49 kDa subunit family. In terms of assembly, NDH-1 is composed of 13 different subunits. Subunits NuoB, CD, E, F, and G constitute the peripheral sector of the complex.

It localises to the cell inner membrane. It catalyses the reaction a quinone + NADH + 5 H(+)(in) = a quinol + NAD(+) + 4 H(+)(out). NDH-1 shuttles electrons from NADH, via FMN and iron-sulfur (Fe-S) centers, to quinones in the respiratory chain. The immediate electron acceptor for the enzyme in this species is believed to be ubiquinone. Couples the redox reaction to proton translocation (for every two electrons transferred, four hydrogen ions are translocated across the cytoplasmic membrane), and thus conserves the redox energy in a proton gradient. The protein is NADH-quinone oxidoreductase subunit C/D of Escherichia coli (strain ATCC 8739 / DSM 1576 / NBRC 3972 / NCIMB 8545 / WDCM 00012 / Crooks).